The sequence spans 51 residues: UPF0391 membrane protein Mbur_2216 (51 aa).

The next 2 helical transmembrane spans lie at 1 to 21 (MADLIGLAIVFLIFALVAYVL) and 31 to 51 (MTIAKWLVIIFIVLAIITILL).

The protein belongs to the UPF0391 family.

Its subcellular location is the cell membrane. The protein is UPF0391 membrane protein Mbur_2216 of Methanococcoides burtonii (strain DSM 6242 / NBRC 107633 / OCM 468 / ACE-M).